Consider the following 506-residue polypeptide: MVSIRPDEISAILKQQIEDYDKSVSVSNVGSVLTVGDGIARVYGLQQAMAGELLEFEDGTEGIALNLEDDNVGAVLMGEGLGIQEGSTVKATGKIASVPVGEAMLGRVVNSLGRAIDGKGEIATSETRLIESMAPGIIQRKSVHEPMQTGITAIDAMIPVGRGQRELIIGDRQTGKTAIAIDTILNQKDQDMICVYVAVGQKAASVANVVEVLRERGALDYSVIVAANASEPAALQYLAPYTGASIAEYFMYKGKATLVIYDDLSKQAAAYRQMSLLLRRPPGREAYPGDVFYCHSRLLERAAKLSDAMGKGSMTALPIIETQAGDVSAYIPTNVISITDGQIFLSSDLFNSGLRPAINVGISVSRVGGAAQTKAIKKIAGTLKLELAQFAELAAFSQFASDLDASTQQQLERGKRLRELLKQPQFSPLILAEQVAIVYAGVKGLIDAVPVDKVVDFSRELREYLKSNKPEFITEIQEKKLMSPEAEAILKDAISEVVSTLVASAA.

ATP is bound at residue 170-177 (GDRQTGKT).

It belongs to the ATPase alpha/beta chains family. F-type ATPases have 2 components, CF(1) - the catalytic core - and CF(0) - the membrane proton channel. CF(1) has five subunits: alpha(3), beta(3), gamma(1), delta(1), epsilon(1). CF(0) has four main subunits: a(1), b(1), b'(1) and c(9-12).

The protein localises to the cellular thylakoid membrane. It carries out the reaction ATP + H2O + 4 H(+)(in) = ADP + phosphate + 5 H(+)(out). Its function is as follows. Produces ATP from ADP in the presence of a proton gradient across the membrane. The alpha chain is a regulatory subunit. The polypeptide is ATP synthase subunit alpha (Parasynechococcus marenigrum (strain WH8102)).